Consider the following 113-residue polypeptide: MHELSLCEGILQILEEQSRTQGFIQVHRVCLEIGALASVEPEALRFHFDVVTQGTLAEGSHLEIVTVPAQAWCLPCGEKVSVGQYFDACPQCGSRQLQVIAGEELRIQQLEVE.

Histidine 2 contributes to the Ni(2+) binding site. Zn(2+)-binding residues include cysteine 73, cysteine 76, cysteine 89, and cysteine 92.

It belongs to the HypA/HybF family.

Its function is as follows. Involved in the maturation of [NiFe] hydrogenases. Required for nickel insertion into the metal center of the hydrogenase. This is Hydrogenase maturation factor HypA from Acidithiobacillus ferrooxidans (strain ATCC 23270 / DSM 14882 / CIP 104768 / NCIMB 8455) (Ferrobacillus ferrooxidans (strain ATCC 23270)).